The primary structure comprises 436 residues: Putative UDP-arabinose 4-epimerase 4 (436 aa).

The interval 1–20 is disordered; that stretch reads MLNSSGVRTQRRSPRPLSLG. The Cytoplasmic segment spans residues 1–60; the sequence is MLNSSGVRTQRRSPRPLSLGGRKIITPTKFAYDHHNPDKVLDFVEMDCLEPKTKNNLTGK. Residues 61-81 traverse the membrane as a helical; Signal-anchor for type II membrane protein segment; the sequence is LLLVASLLILAIIVISQSSSF. Residues 82 to 436 are Lumenal-facing; sequence TSPSAFSQRE…KIHPHGYNSY (355 aa). Residue 96–127 participates in NAD(+) binding; it reads HVLVTGGAGYIGSHAALRLLRDSYRVTIVDNL. The active-site Proton acceptor is the Tyr-244.

Belongs to the NAD(P)-dependent epimerase/dehydratase family. It depends on NAD(+) as a cofactor.

The protein localises to the golgi apparatus. It is found in the golgi stack membrane. It carries out the reaction UDP-beta-L-arabinopyranose = UDP-alpha-D-xylose. It functions in the pathway nucleotide-sugar biosynthesis; UDP-L-arabinose biosynthesis; UDP-L-arabinose from UDP-alpha-D-xylose: step 1/1. The protein operates within cell wall biogenesis; cell wall polysaccharide biosynthesis. The sequence is that of Putative UDP-arabinose 4-epimerase 4 from Arabidopsis thaliana (Mouse-ear cress).